A 264-amino-acid polypeptide reads, in one-letter code: Diphthine synthase (264 aa).

Residues leucine 10, aspartate 87, valine 90, 115–116 (SI), leucine 166, alanine 209, and histidine 234 contribute to the S-adenosyl-L-methionine site.

This sequence belongs to the diphthine synthase family. Homodimer.

It catalyses the reaction 2-[(3S)-amino-3-carboxypropyl]-L-histidyl-[translation elongation factor 2] + 3 S-adenosyl-L-methionine = diphthine-[translation elongation factor 2] + 3 S-adenosyl-L-homocysteine + 3 H(+). It participates in protein modification; peptidyl-diphthamide biosynthesis. Its function is as follows. S-adenosyl-L-methionine-dependent methyltransferase that catalyzes the trimethylation of the amino group of the modified target histidine residue in translation elongation factor 2 (EF-2), to form an intermediate called diphthine. The three successive methylation reactions represent the second step of diphthamide biosynthesis. The polypeptide is Diphthine synthase (Thermococcus kodakarensis (strain ATCC BAA-918 / JCM 12380 / KOD1) (Pyrococcus kodakaraensis (strain KOD1))).